The primary structure comprises 36 residues: Photosystem II reaction center protein M (36 aa).

The helical transmembrane segment at 5-25 threads the bilayer; sequence ILGVIAVALFILIPTSFLLIL.

This sequence belongs to the PsbM family. In terms of assembly, PSII is composed of 1 copy each of membrane proteins PsbA, PsbB, PsbC, PsbD, PsbE, PsbF, PsbH, PsbI, PsbJ, PsbK, PsbL, PsbM, PsbT, PsbY, PsbZ, Psb30/Ycf12, at least 3 peripheral proteins of the oxygen-evolving complex and a large number of cofactors. It forms dimeric complexes.

The protein localises to the plastid. Its subcellular location is the chloroplast thylakoid membrane. Its function is as follows. One of the components of the core complex of photosystem II (PSII). PSII is a light-driven water:plastoquinone oxidoreductase that uses light energy to abstract electrons from H(2)O, generating O(2) and a proton gradient subsequently used for ATP formation. It consists of a core antenna complex that captures photons, and an electron transfer chain that converts photonic excitation into a charge separation. This subunit is found at the monomer-monomer interface. The sequence is that of Photosystem II reaction center protein M from Bigelowiella natans (Pedinomonas minutissima).